Consider the following 1029-residue polypeptide: MPNTLSLTLSAILARRDWENPGVTQWNRLEAHAPLHSWRLEQPALDDAASASRRSLNGVWRFNYFPAPEQIPEAWVTEDCADAVPMPVPSNWQMQGFDTPIYTNVTYPIPVNPPFVPQENPTGCYSLTFDVDDAWLQSGQTRIIFDGVNSAFHLWCNGRWMGYSQDSRLPAEFNLSTVLRPGENRLAVMVLRWCDGSYLEDQDMWRMSGIFRDVTLLHKPETQIADYRVVTDLNAELDRAVLKADVALAGAGFADCEVVFTLWRKGEKCASVSRRPGSAVVDERGSWDERLTVAIPIDRPALWSAETPELYRLTMALLGPQGEVLEVEACDVGFRRVDISNGLLKLNGKPLLIRGVNRLEHHPENGQVMDEATMRRDIEIMKQHNFNAVRCSHYPNHPLWYRLCDRYGLYVVDEANIETHGMVPMSRLADDPRWLPAMSERVTRMVQRDRNHPSIIIWSLGNESGHGANHDALYRWLKTTDPTRPVQYEGGGANTAATDIVCPMYARVDWDQPFPAVPKWSIKKWIGMPDETRPLILCEYAHAMGNSFGGFAKYWQAFRSHPRLQGGFVWDWVDQALTKKDEKGNAFWAYGGDFGDTPNDRQFCLNGLVFPDRTPHPALYEAQRAQQFFTFTLVSTSPLMIEVQSGYLFRPTDNEVLSWTVARDGKVLASGEVTLAIAPEGVQRLEIALPELKAGPGEIWLNVEVRQPRATPWSPAGHRCAWEQWPLPAPLFIAPPASTGEPPVLTQNDRILEVTHRQQRWQFDRASGYLTQWWRNGVETLLSPVTDNVSRAPLDNDIGVSEATRIDPNAWVERWKAAGMYDLTSRMLHCEAEQHAREVVVTTLNVLEHRGRALFLSRKIWRLDEQGVLHGDIQVDIASDIPKPARIGLSVHLAETPEKVDWLGLGPHENYPDRKLAAQQGRWTLPLADMHTPYIFPTENGLRCDTRKLVLGAHQLNGAFHFSVGRYSQQQLRETTHHHLLREEPGGWLNLDAFHMGVGGDDSWSPSVSPEFILQTRQLRYTFSWQQNP.

Residues Asn104 and Asp203 each contribute to the substrate site. Residue Asp203 coordinates Na(+). Residues Glu418, His420, and Glu463 each contribute to the Mg(2+) site. Residues Glu463 and Glu539 to His542 each bind substrate. Glu463 (proton donor) is an active-site residue. Glu539 (nucleophile) is an active-site residue. Residue Asn599 participates in Mg(2+) binding. Na(+) contacts are provided by Phe603 and Asn606. 2 residues coordinate substrate: Asn606 and Trp1004.

Belongs to the glycosyl hydrolase 2 family. In terms of assembly, homotetramer. Mg(2+) is required as a cofactor. Requires Na(+) as cofactor.

The enzyme catalyses Hydrolysis of terminal non-reducing beta-D-galactose residues in beta-D-galactosides.. The protein is Beta-galactosidase 2 of Enterobacter cloacae.